Consider the following 81-residue polypeptide: Cytotoxin 4 (81 aa).

Residues 1-21 (MKTLLLTLVVVTIVCLDLGYT) form the signal peptide. 4 cysteine pairs are disulfide-bonded: cysteine 24–cysteine 42, cysteine 35–cysteine 59, cysteine 63–cysteine 74, and cysteine 75–cysteine 80.

It belongs to the three-finger toxin family. Short-chain subfamily. Type IA cytotoxin sub-subfamily. In terms of assembly, monomer in solution; Homodimer and oligomer in the presence of negatively charged lipids forming a pore with a size ranging between 20 and 30 Angstroms. As to expression, expressed by the venom gland.

The protein localises to the secreted. It is found in the target cell membrane. Its function is as follows. Basic protein that bind to cell membrane and depolarizes cardiomyocytes. This cytotoxin also shows lytic activities, but 2-fold more important than that of CTX-A2. It binds to the integrin alpha-V/beta-3 with a moderate affinity. Inhibits protein kinase C. It may interact with sulfatides in the cell membrane, which induces pore formation and cell internalization and is responsible for cytotoxicity in cardiomyocytes. It may also target the mitochondrial membrane and induces mitochondrial swelling and fragmentation. This chain is Cytotoxin 4, found in Naja atra (Chinese cobra).